The primary structure comprises 266 residues: Type II iodothyronine deiodinase (266 aa).

Topologically, residues 1–13 (MGSASEDLLVTLQ) are lumenal. Residues 14–34 (ILPGFFSNCLFLALYDSVVLV) traverse the membrane as a helical; Signal-anchor for type III membrane protein segment. Over 35 to 266 (KRVVALLSRS…QWLELSYGRR (232 aa)) the chain is Cytoplasmic. The active site involves selenocysteine 134. Residue selenocysteine 134 is a non-standard amino acid, selenocysteine.

Belongs to the iodothyronine deiodinase family. In terms of assembly, predominantly monomer. Can form homodimers but homodimerization is not essential for enzyme activity.

It localises to the endoplasmic reticulum membrane. It carries out the reaction 3,3',5-triiodo-L-thyronine + iodide + A + H(+) = L-thyroxine + AH2. The enzyme catalyses 3,3'-diiodo-L-thyronine + iodide + A + H(+) = 3,3',5'-triiodo-L-thyronine + AH2. The catalysed reaction is 3'-iodo-L-thyronine + iodide + A + H(+) = 3',5'-diiodo-L-thyronine + AH2. Not inhibited by N(6)-propylthiouracil. Its function is as follows. Plays a crucial role in the metabolism of thyroid hormones (TH) and has specific roles in TH activation and inactivation by deiodination. Catalyzes the conversion of T4 (L-thyroxine/3,5,3',5'-tetraiodothyronine) to T3 (3,5,3'-triiodothyronine) and rT3 (3,3',5'-triiodothyronine) to T2 (3,3'-diiodothyronine) via outer-ring deiodination (ORD). Catalyzes the conversion 3',5'-T2 (3,5-diiodothyronine) to 3-T1 (3-monoiodothyronine) via ORD. This is Type II iodothyronine deiodinase (dio2) from Fundulus heteroclitus (Killifish).